The chain runs to 251 residues: Triosephosphate isomerase (251 aa).

Position 9–11 (9–11 (NWK)) interacts with substrate. Residue histidine 96 is the Electrophile of the active site. Glutamate 168 (proton acceptor) is an active-site residue. Residues glycine 174, serine 214, and 235 to 236 (GG) contribute to the substrate site.

It belongs to the triosephosphate isomerase family. Homodimer.

The protein resides in the cytoplasm. The enzyme catalyses D-glyceraldehyde 3-phosphate = dihydroxyacetone phosphate. It participates in carbohydrate biosynthesis; gluconeogenesis. Its pathway is carbohydrate degradation; glycolysis; D-glyceraldehyde 3-phosphate from glycerone phosphate: step 1/1. In terms of biological role, involved in the gluconeogenesis. Catalyzes stereospecifically the conversion of dihydroxyacetone phosphate (DHAP) to D-glyceraldehyde-3-phosphate (G3P). The chain is Triosephosphate isomerase from Porphyromonas gingivalis (strain ATCC 33277 / DSM 20709 / CIP 103683 / JCM 12257 / NCTC 11834 / 2561).